A 297-amino-acid polypeptide reads, in one-letter code: MLDNKDIATPSRTRALLDKYGFNFKKSLGQNFLIDVNIINNIIDASDIDAQTGVIEIGPGIGSLTEQLARHAKRVLAFEIDQRLIPVLNDTLSPYDNVTVINEDILKANIKEAVENHLQDCEKIMVVANLPYYITTPILLNLMQQDIPIDGYVVMMQKEVGERLNAEVGSKAYGSLSIVVQYYTETSKVLTVPKSVFMPPPNVDSIVVKLMQRTEPLVTVDNEEAFFKLAKAAFAQRRKTINNNYQNYFKDGKQHKEVILQWLEQAGIDPRRRGETLSIQDFAKLYEEKKKFPQLEN.

Residues asparagine 31, leucine 33, glycine 58, glutamate 79, aspartate 104, and asparagine 129 each coordinate S-adenosyl-L-methionine.

The protein belongs to the class I-like SAM-binding methyltransferase superfamily. rRNA adenine N(6)-methyltransferase family. RsmA subfamily.

Its subcellular location is the cytoplasm. It catalyses the reaction adenosine(1518)/adenosine(1519) in 16S rRNA + 4 S-adenosyl-L-methionine = N(6)-dimethyladenosine(1518)/N(6)-dimethyladenosine(1519) in 16S rRNA + 4 S-adenosyl-L-homocysteine + 4 H(+). Its function is as follows. Specifically dimethylates two adjacent adenosines (A1518 and A1519) in the loop of a conserved hairpin near the 3'-end of 16S rRNA in the 30S particle. May play a critical role in biogenesis of 30S subunits. The chain is Ribosomal RNA small subunit methyltransferase A from Staphylococcus aureus (strain Newman).